Reading from the N-terminus, the 479-residue chain is Sulfate adenylyltransferase subunit 1 (479 aa).

A tr-type G domain is found at 25–239; sequence KSLLRFLTCG…EVLETVDIQR (215 aa). A G1 region spans residues 34–41; sequence GSVDDGKS. 34-41 is a GTP binding site; it reads GSVDDGKS. The G2 stretch occupies residues 92–96; it reads GITID. The segment at 113–116 is G3; sequence DTPG. Residues 113–117 and 168–171 contribute to the GTP site; these read DTPGH and NKMD. Residues 168–171 form a G4 region; sequence NKMD. Residues 206–208 are G5; it reads SAL.

It belongs to the TRAFAC class translation factor GTPase superfamily. Classic translation factor GTPase family. CysN/NodQ subfamily. In terms of assembly, heterodimer composed of CysD, the smaller subunit, and CysN.

It carries out the reaction sulfate + ATP + H(+) = adenosine 5'-phosphosulfate + diphosphate. The protein operates within sulfur metabolism; hydrogen sulfide biosynthesis; sulfite from sulfate: step 1/3. Functionally, with CysD forms the ATP sulfurylase (ATPS) that catalyzes the adenylation of sulfate producing adenosine 5'-phosphosulfate (APS) and diphosphate, the first enzymatic step in sulfur assimilation pathway. APS synthesis involves the formation of a high-energy phosphoric-sulfuric acid anhydride bond driven by GTP hydrolysis by CysN coupled to ATP hydrolysis by CysD. This is Sulfate adenylyltransferase subunit 1 from Salmonella typhi.